Consider the following 102-residue polypeptide: Carboxysome shell protein CsoS1C (102 aa).

The BMC domain occupies 8-93 (ALGMIETRGL…PHKEVEPVLA (86 aa)).

This sequence belongs to the bacterial microcompartments protein family. CsoS1 subfamily. Homohexamer with a small central pore.

Its subcellular location is the carboxysome. Its function is as follows. One of shell proteins of the carboxysome, a polyhedral inclusion where RuBisCO (ribulose bisphosphate carboxylase, ccbL-ccbS) is sequestered. Assembles into hexamers which make sheets that form the facets of the polyhedral carboxysome. The shell probably limits the diffusion of CO(2) into and out of the carboxysome. This is Carboxysome shell protein CsoS1C from Hydrogenovibrio crunogenus (strain DSM 25203 / XCL-2) (Thiomicrospira crunogena).